The sequence spans 196 residues: Holliday junction branch migration complex subunit RuvA (196 aa).

A domain I region spans residues 1-63; the sequence is MYDYIKGILT…EDAHLLYGFA (63 aa). The tract at residues 64–142 is domain II; sequence TENEKSVFLS…MSEEAGPVQQ (79 aa). The interval 142 to 146 is flexible linker; the sequence is QVAPS. The interval 147-196 is domain III; the sequence is SENIALEEAMEAMEALGYRPAELKKIKKFFEGTNDTAENYIKSALKMLMK.

Belongs to the RuvA family. As to quaternary structure, homotetramer. Forms an RuvA(8)-RuvB(12)-Holliday junction (HJ) complex. HJ DNA is sandwiched between 2 RuvA tetramers; dsDNA enters through RuvA and exits via RuvB. An RuvB hexamer assembles on each DNA strand where it exits the tetramer. Each RuvB hexamer is contacted by two RuvA subunits (via domain III) on 2 adjacent RuvB subunits; this complex drives branch migration. In the full resolvosome a probable DNA-RuvA(4)-RuvB(12)-RuvC(2) complex forms which resolves the HJ.

Its subcellular location is the cytoplasm. Its function is as follows. The RuvA-RuvB-RuvC complex processes Holliday junction (HJ) DNA during genetic recombination and DNA repair, while the RuvA-RuvB complex plays an important role in the rescue of blocked DNA replication forks via replication fork reversal (RFR). RuvA specifically binds to HJ cruciform DNA, conferring on it an open structure. The RuvB hexamer acts as an ATP-dependent pump, pulling dsDNA into and through the RuvAB complex. HJ branch migration allows RuvC to scan DNA until it finds its consensus sequence, where it cleaves and resolves the cruciform DNA. The protein is Holliday junction branch migration complex subunit RuvA of Streptococcus suis (strain 98HAH33).